We begin with the raw amino-acid sequence, 295 residues long: Pyridoxal 5'-phosphate synthase subunit PdxS (295 aa).

Aspartate 25 is a binding site for D-ribose 5-phosphate. The Schiff-base intermediate with D-ribose 5-phosphate role is filled by lysine 82. Residue glycine 154 coordinates D-ribose 5-phosphate. Residue arginine 166 coordinates D-glyceraldehyde 3-phosphate. D-ribose 5-phosphate is bound by residues glycine 215 and 236–237 (GS).

The protein belongs to the PdxS/SNZ family. In terms of assembly, in the presence of PdxT, forms a dodecamer of heterodimers.

It carries out the reaction aldehydo-D-ribose 5-phosphate + D-glyceraldehyde 3-phosphate + L-glutamine = pyridoxal 5'-phosphate + L-glutamate + phosphate + 3 H2O + H(+). It functions in the pathway cofactor biosynthesis; pyridoxal 5'-phosphate biosynthesis. In terms of biological role, catalyzes the formation of pyridoxal 5'-phosphate from ribose 5-phosphate (RBP), glyceraldehyde 3-phosphate (G3P) and ammonia. The ammonia is provided by the PdxT subunit. Can also use ribulose 5-phosphate and dihydroxyacetone phosphate as substrates, resulting from enzyme-catalyzed isomerization of RBP and G3P, respectively. This Pasteurella multocida (strain Pm70) protein is Pyridoxal 5'-phosphate synthase subunit PdxS.